We begin with the raw amino-acid sequence, 76 residues long: ATP synthase subunit 9, mitochondrial (76 aa).

2 helical membrane-spanning segments follow: residues 10–30 and 52–72; these read IGAG…AIVF and ILGF…SFLL.

Belongs to the ATPase C chain family. As to quaternary structure, F-type ATPases have 2 components, CF(1) - the catalytic core - and CF(0) - the membrane proton channel. CF(1) has five subunits: alpha(3), beta(3), gamma(1), delta(1), epsilon(1). CF(0) has three main subunits: a, b and c.

It localises to the mitochondrion membrane. Functionally, mitochondrial membrane ATP synthase (F(1)F(0) ATP synthase or Complex V) produces ATP from ADP in the presence of a proton gradient across the membrane which is generated by electron transport complexes of the respiratory chain. F-type ATPases consist of two structural domains, F(1) - containing the extramembraneous catalytic core and F(0) - containing the membrane proton channel, linked together by a central stalk and a peripheral stalk. During catalysis, ATP synthesis in the catalytic domain of F(1) is coupled via a rotary mechanism of the central stalk subunits to proton translocation. Part of the complex F(0) domain. A homomeric c-ring of probably 10 subunits is part of the complex rotary element. The chain is ATP synthase subunit 9, mitochondrial (ATP9) from Kluyveromyces lactis (strain ATCC 8585 / CBS 2359 / DSM 70799 / NBRC 1267 / NRRL Y-1140 / WM37) (Yeast).